A 332-amino-acid polypeptide reads, in one-letter code: Anthranilate phosphoribosyltransferase (332 aa).

5-phospho-alpha-D-ribose 1-diphosphate contacts are provided by residues Gly-79, 82 to 83 (GD), Ser-87, 89 to 92 (NIST), 107 to 115 (KHGNRSVSS), and Ser-119. Gly-79 lines the anthranilate pocket. Ser-91 contributes to the Mg(2+) binding site. Anthranilate is bound at residue Asn-110. Residue Arg-165 participates in anthranilate binding. Asp-223 and Glu-224 together coordinate Mg(2+).

The protein belongs to the anthranilate phosphoribosyltransferase family. Homodimer. Mg(2+) serves as cofactor.

It catalyses the reaction N-(5-phospho-beta-D-ribosyl)anthranilate + diphosphate = 5-phospho-alpha-D-ribose 1-diphosphate + anthranilate. It participates in amino-acid biosynthesis; L-tryptophan biosynthesis; L-tryptophan from chorismate: step 2/5. Its function is as follows. Catalyzes the transfer of the phosphoribosyl group of 5-phosphorylribose-1-pyrophosphate (PRPP) to anthranilate to yield N-(5'-phosphoribosyl)-anthranilate (PRA). This chain is Anthranilate phosphoribosyltransferase, found in Erwinia tasmaniensis (strain DSM 17950 / CFBP 7177 / CIP 109463 / NCPPB 4357 / Et1/99).